The sequence spans 55 residues: ATP synthase F(0) complex subunit 8 (55 aa).

A helical transmembrane segment spans residues L4–I24. The disordered stretch occupies residues T34–H55.

Belongs to the ATPase protein 8 family. Component of the ATP synthase complex composed at least of ATP5F1A/subunit alpha, ATP5F1B/subunit beta, ATP5MC1/subunit c (homooctomer), MT-ATP6/subunit a, MT-ATP8/subunit 8, ATP5ME/subunit e, ATP5MF/subunit f, ATP5MG/subunit g, ATP5MK/subunit k, ATP5MJ/subunit j, ATP5F1C/subunit gamma, ATP5F1D/subunit delta, ATP5F1E/subunit epsilon, ATP5PF/subunit F6, ATP5PB/subunit b, ATP5PD/subunit d, ATP5PO/subunit OSCP. ATP synthase complex consists of a soluble F(1) head domain (subunits alpha(3) and beta(3)) - the catalytic core - and a membrane F(0) domain - the membrane proton channel (subunits c, a, 8, e, f, g, k and j). These two domains are linked by a central stalk (subunits gamma, delta, and epsilon) rotating inside the F1 region and a stationary peripheral stalk (subunits F6, b, d, and OSCP).

The protein resides in the mitochondrion membrane. Its function is as follows. Subunit 8, of the mitochondrial membrane ATP synthase complex (F(1)F(0) ATP synthase or Complex V) that produces ATP from ADP in the presence of a proton gradient across the membrane which is generated by electron transport complexes of the respiratory chain. ATP synthase complex consist of a soluble F(1) head domain - the catalytic core - and a membrane F(1) domain - the membrane proton channel. These two domains are linked by a central stalk rotating inside the F(1) region and a stationary peripheral stalk. During catalysis, ATP synthesis in the catalytic domain of F(1) is coupled via a rotary mechanism of the central stalk subunits to proton translocation. In vivo, can only synthesize ATP although its ATP hydrolase activity can be activated artificially in vitro. Part of the complex F(0) domain. This Oncorhynchus mykiss (Rainbow trout) protein is ATP synthase F(0) complex subunit 8.